The sequence spans 163 residues: Putative 4-hydroxy-4-methyl-2-oxoglutarate aldolase (163 aa).

Substrate contacts are provided by residues 76-79 (GDML) and Arg-98. Asp-99 serves as a coordination point for a divalent metal cation.

It belongs to the class II aldolase/RraA-like family. As to quaternary structure, homotrimer. A divalent metal cation serves as cofactor.

It catalyses the reaction 4-hydroxy-4-methyl-2-oxoglutarate = 2 pyruvate. The enzyme catalyses oxaloacetate + H(+) = pyruvate + CO2. Catalyzes the aldol cleavage of 4-hydroxy-4-methyl-2-oxoglutarate (HMG) into 2 molecules of pyruvate. Also contains a secondary oxaloacetate (OAA) decarboxylase activity due to the common pyruvate enolate transition state formed following C-C bond cleavage in the retro-aldol and decarboxylation reactions. The protein is Putative 4-hydroxy-4-methyl-2-oxoglutarate aldolase of Pseudomonas putida (strain W619).